The following is a 486-amino-acid chain: Hexosaminidase D (486 aa).

E149 (proton donor) is an active-site residue.

The protein belongs to the glycosyl hydrolase 20 family. As to quaternary structure, homodimer; disulfide-linked. Expressed in synovial fibroblasts and synovial membranes.

It is found in the cytoplasm. It localises to the nucleus. The protein resides in the extracellular vesicle. It catalyses the reaction Hydrolysis of terminal non-reducing N-acetyl-D-hexosamine residues in N-acetyl-beta-D-hexosaminides.. With respect to regulation, inhibited by O-(2-acetamido-2-deoxy-D-glucopyranosylidene)amino N-phenylcarbamate (PUGNAc). Inhibited by galacto-NAG-thiazoline. Functionally, has hexosaminidase activity. Responsible for the cleavage of the monosaccharides N-acetylglucosamine (GlcNAc) and N-acetylgalactosamine (GalNAc) from cellular substrates. Has a preference for galactosaminide over glucosaminide substrates. In Homo sapiens (Human), this protein is Hexosaminidase D.